We begin with the raw amino-acid sequence, 551 residues long: MTYSTVNINTPPPYLALASNEKLPTVLSIAGTDPSGGAGVEADVKTITAHRCYAMTCITALNAQTPVKVYSINNTPKEVVSQILDANLQDMKCDVIKTGMLTTAAIEVLHEKLLQLGENRPKLVVDPVLVATSGSSLAGKDIASLITEKIAPFADILTPNIPECFKLLGEDREISKLRDIFEVAKDLAKITKCSNILVKGGHIPWNDEEGKYITDVLYLGAEQRFITFKGNFVNTTHTHGTGCTLASAIASNLARGYSLPQSVYGGIEYVQNAVAIGCDVTKETVKDNGPINHVYAIEIPLEKMLSDECFTASDAVHKKPVKSSLNKIPGGSFYKYLINHPKVKPHWDSYVNHDFVRKVADGSLEPKKFQFFIEQDYLYLVNYARISCIAGSKSPCLEDLEKELVIVECVRNGLCQHERRLREEFGIKDPDYLQKIQRGPALRAYCRYFNDVSRRGNWQELVIALNPCLMGYVHALTKIKDEVTAAEGSVYREWCETYSSSWCHEAMLEGEKLLNHILETYPPEKLDTLVTIYAEVCELEANFWTAALEYE.

Residue Gln-64 coordinates 4-amino-5-hydroxymethyl-2-methylpyrimidine.

The protein in the N-terminal section; belongs to the ThiD family. It in the C-terminal section; belongs to the thiaminase-2 family.

It carries out the reaction 4-amino-5-hydroxymethyl-2-methylpyrimidine + ATP = 4-amino-2-methyl-5-(phosphooxymethyl)pyrimidine + ADP + H(+). The catalysed reaction is 4-amino-2-methyl-5-(phosphooxymethyl)pyrimidine + ATP = 4-amino-2-methyl-5-(diphosphooxymethyl)pyrimidine + ADP. The protein operates within cofactor biosynthesis; thiamine diphosphate biosynthesis; 4-amino-2-methyl-5-diphosphomethylpyrimidine from 5-amino-1-(5-phospho-D-ribosyl)imidazole: step 2/3. Its pathway is cofactor biosynthesis; thiamine diphosphate biosynthesis; 4-amino-2-methyl-5-diphosphomethylpyrimidine from 5-amino-1-(5-phospho-D-ribosyl)imidazole: step 3/3. Its function is as follows. Catalyzes the phosphorylation of hydroxymethylpyrimidine phosphate (HMP-P) to HMP-PP, and also probably that of HMP to HMP-P. In Saccharomyces cerevisiae (strain ATCC 204508 / S288c) (Baker's yeast), this protein is Hydroxymethylpyrimidine/phosphomethylpyrimidine kinase THI21 (THI21).